The sequence spans 324 residues: GDP-mannose transporter (324 aa).

Residues 1 to 13 (MSELKSRIGNSGS) lie on the Cytoplasmic side of the membrane. Residues 14–34 (IANSGPVSILCYCASSILMTV) form a helical membrane-spanning segment. Over 35–44 (TNKFVVNTDG) the chain is Lumenal. Residues 45 to 65 (FNMFFVMLFAQSLVCTMCLMV) form a helical membrane-spanning segment. Residues 66 to 76 (LKMFGYAKYRP) are Cytoplasmic-facing. The chain crosses the membrane as a helical span at residues 77–97 (LNLIDVKNWLPISFLLVFMIF). Residues 98 to 116 (TSAKALKYMPVPIYTIFKN) lie on the Lumenal side of the membrane. Asn116 carries N-linked (GlcNAc...) asparagine glycosylation. Residues 117–137 (LTIILIAYGEVLFFGGSVTPM) traverse the membrane as a helical segment. Glu138 is a topological domain (cytoplasmic). The chain crosses the membrane as a helical span at residues 139-159 (LSSFILMVLSSVVASLGDQQA). Residues 160-170 (AKIAQPLANNS) are Lumenal-facing. Residue Asn168 is glycosylated (N-linked (GlcNAc...) asparagine). The helical transmembrane segment at 171–191 (ILSPEYYWMFLNCICSASFVL) threads the bilayer. The Cytoplasmic portion of the chain corresponds to 192–204 (IMRKRIKLTNFKD). The helical transmembrane segment at 205 to 225 (YDTMFYNNALALPILLGFSFL) threads the bilayer. Residues 226-243 (SEDWSSENLAQNFSGESL) lie on the Lumenal side of the membrane. An N-linked (GlcNAc...) asparagine glycan is attached at Asn237. Residues 244-264 (SAMIISGMTSVGISYCSGWCV) form a helical membrane-spanning segment. Residues 265–270 (RATSST) are Cytoplasmic-facing. Residues 271-291 (TYSMVGALNKLPIALAGLIFF) form a helical membrane-spanning segment. The Lumenal portion of the chain corresponds to 292 to 295 (DAPR). Residues 296–316 (NFLSIMSIFIGFASGLSYAVA) form a helical membrane-spanning segment. Topologically, residues 317-324 (KQKKVQKN) are cytoplasmic.

The protein belongs to the TPT transporter family. SLC35D subfamily. In terms of assembly, homooligomer.

The protein localises to the golgi apparatus membrane. The protein resides in the cytoplasmic vesicle membrane. Its subcellular location is the endoplasmic reticulum membrane. In terms of biological role, involved in the import of GDP-mannose from the cytoplasm into the Golgi lumen. The protein is GDP-mannose transporter (VRG4) of Candida glabrata (strain ATCC 2001 / BCRC 20586 / JCM 3761 / NBRC 0622 / NRRL Y-65 / CBS 138) (Yeast).